The following is a 331-amino-acid chain: MAKTMMQDRLINPLEGAADAPDANIRPALLAEYIGQPVVREQMEVFIQAARARDEALDHTLIFGPPGLGKTTLANIIAREMGGNLRSTSGPVLERAGDLAAMLTNLEAGDVLFIDEIHRLSPVIEEILYPAMEDFQLDIMIGEGPAARSIKLELPPFTLVAATTRAGLLTSPLRDRFGIVQRLEFYNIADLTTIVSRAARLMRVPMSEDGAVEIARRARGTPRIANRLLRRVRDYAQVRGDGSINGAIAGSALDMLAVDRRGLDHLDRRYIEILHERFDGGPAGVEAVAAAMAEDRGTLEDVIEPYLIQQGYVLRTARGRVLTQMAIDQMV.

The tract at residues M1–Y186 is large ATPase domain (RuvB-L). Residues I25, R26, G67, K70, T71, T72, E133 to F135, R176, Y186, and R223 each bind ATP. T71 is a Mg(2+) binding site. Residues N187–A257 form a small ATPAse domain (RuvB-S) region. The head domain (RuvB-H) stretch occupies residues R260–V331. Residues R296, R315, and R320 each coordinate DNA.

It belongs to the RuvB family. In terms of assembly, homohexamer. Forms an RuvA(8)-RuvB(12)-Holliday junction (HJ) complex. HJ DNA is sandwiched between 2 RuvA tetramers; dsDNA enters through RuvA and exits via RuvB. An RuvB hexamer assembles on each DNA strand where it exits the tetramer. Each RuvB hexamer is contacted by two RuvA subunits (via domain III) on 2 adjacent RuvB subunits; this complex drives branch migration. In the full resolvosome a probable DNA-RuvA(4)-RuvB(12)-RuvC(2) complex forms which resolves the HJ.

It localises to the cytoplasm. It carries out the reaction ATP + H2O = ADP + phosphate + H(+). Its function is as follows. The RuvA-RuvB-RuvC complex processes Holliday junction (HJ) DNA during genetic recombination and DNA repair, while the RuvA-RuvB complex plays an important role in the rescue of blocked DNA replication forks via replication fork reversal (RFR). RuvA specifically binds to HJ cruciform DNA, conferring on it an open structure. The RuvB hexamer acts as an ATP-dependent pump, pulling dsDNA into and through the RuvAB complex. RuvB forms 2 homohexamers on either side of HJ DNA bound by 1 or 2 RuvA tetramers; 4 subunits per hexamer contact DNA at a time. Coordinated motions by a converter formed by DNA-disengaged RuvB subunits stimulates ATP hydrolysis and nucleotide exchange. Immobilization of the converter enables RuvB to convert the ATP-contained energy into a lever motion, pulling 2 nucleotides of DNA out of the RuvA tetramer per ATP hydrolyzed, thus driving DNA branch migration. The RuvB motors rotate together with the DNA substrate, which together with the progressing nucleotide cycle form the mechanistic basis for DNA recombination by continuous HJ branch migration. Branch migration allows RuvC to scan DNA until it finds its consensus sequence, where it cleaves and resolves cruciform DNA. The polypeptide is Holliday junction branch migration complex subunit RuvB (Psychrobacter arcticus (strain DSM 17307 / VKM B-2377 / 273-4)).